The primary structure comprises 353 residues: Protein CYTOKININ-RESPONSIVE GATA TRANSCRIPTION FACTOR 1 (353 aa).

The short motif at 137-144 (IRKGAATD) is the Nuclear localization signal 1 element. The interval 142–166 (ATDPEGGAVRKPRRRAQAHQDESQQ) is disordered. The segment at 178 to 203 (CSDCNTTKTPLWRSGPCGPKSLCNAC) adopts a GATA-type zinc-finger fold. Positions 244-251 (EKRAADVD) match the Nuclear localization signal 2 motif.

This sequence belongs to the type IV zinc-finger family. Class B subfamily. As to expression, mostly expressed in leaves and stems, and, at low levels, in roots.

Its subcellular location is the nucleus. Its function is as follows. Transcriptional regulator that specifically binds 5'-GATA-3' or 5'-GAT-3' motifs within gene promoters. Influences the expression of nuclear encoded chloroplast-targeted genes. Regulates chloroplast development and promotes chlorophyll accumulation. Modulates plant architecture (e.g. height, length and width of leaf blades, and flowering tillers production) and represses tillering, probably by modulating number of cells. Promotes senescence. Involved in grain filling, panicle development and starch production. The protein is Protein CYTOKININ-RESPONSIVE GATA TRANSCRIPTION FACTOR 1 of Oryza sativa subsp. japonica (Rice).